A 305-amino-acid polypeptide reads, in one-letter code: tRNA pseudouridine synthase B (305 aa).

Asp-48 acts as the Nucleophile in catalysis.

Belongs to the pseudouridine synthase TruB family. Type 1 subfamily.

It catalyses the reaction uridine(55) in tRNA = pseudouridine(55) in tRNA. In terms of biological role, responsible for synthesis of pseudouridine from uracil-55 in the psi GC loop of transfer RNAs. The polypeptide is tRNA pseudouridine synthase B (Pseudomonas putida (strain ATCC 700007 / DSM 6899 / JCM 31910 / BCRC 17059 / LMG 24140 / F1)).